The following is a 309-amino-acid chain: MIDCIYNSDSIFEIKKLDSNSIHAIISDIPYGIDYDDWDILHSNTNSALGGTSSAQHKTSLFKRRGKPLNGWSEADKKRPQEYQEWVESWSNEWFRVLKSGSSVFVFAGRQFAHRVVVAFENSGFTFKDMLSWEKDKAPHRAQRISCVFERRGDIANTNKWVGWRVANLRPLFEPILWFQKPYKTGSTLADNLIKHEVGAWNENSLTHWNIQQGALNHSNILKVRITSEDKGYHVAQKPLNLMKLLIDLVTKEEQIVLDPFAGSGTTLLAAKELNRHFIGYEKNNGIYNIAVNRLGIEKNNCFYNKEKK.

This sequence belongs to the N(4)/N(6)-methyltransferase family.

The enzyme catalyses a 2'-deoxyadenosine in DNA + S-adenosyl-L-methionine = an N(6)-methyl-2'-deoxyadenosine in DNA + S-adenosyl-L-homocysteine + H(+). Its function is as follows. A beta subtype methylase that recognizes the double-stranded sequence 5'-AAGCTT-3', methylates A-1 on both strands, and protects the DNA from cleavage by the HindIII endonuclease. In Haemophilus influenzae (strain ATCC 51907 / DSM 11121 / KW20 / Rd), this protein is Type II methyltransferase M.HindIII.